The following is a 122-amino-acid chain: Large ribosomal subunit protein uL14 (122 aa).

The protein belongs to the universal ribosomal protein uL14 family. As to quaternary structure, part of the 50S ribosomal subunit. Forms a cluster with proteins L3 and L19. In the 70S ribosome, L14 and L19 interact and together make contacts with the 16S rRNA in bridges B5 and B8.

Its function is as follows. Binds to 23S rRNA. Forms part of two intersubunit bridges in the 70S ribosome. This Streptomyces avermitilis (strain ATCC 31267 / DSM 46492 / JCM 5070 / NBRC 14893 / NCIMB 12804 / NRRL 8165 / MA-4680) protein is Large ribosomal subunit protein uL14.